A 142-amino-acid polypeptide reads, in one-letter code: Transcription antitermination protein NusB (142 aa).

The protein belongs to the NusB family.

Involved in transcription antitermination. Required for transcription of ribosomal RNA (rRNA) genes. Binds specifically to the boxA antiterminator sequence of the ribosomal RNA (rrn) operons. The protein is Transcription antitermination protein NusB of Persephonella marina (strain DSM 14350 / EX-H1).